We begin with the raw amino-acid sequence, 130 residues long: Small ribosomal subunit protein uS9 (130 aa).

Positions 105-130 (TRDPRMKERKKYGLKKARRAPQFSKR) are disordered. Basic residues predominate over residues 111-130 (KERKKYGLKKARRAPQFSKR).

The protein belongs to the universal ribosomal protein uS9 family.

This Acetivibrio thermocellus (strain ATCC 27405 / DSM 1237 / JCM 9322 / NBRC 103400 / NCIMB 10682 / NRRL B-4536 / VPI 7372) (Clostridium thermocellum) protein is Small ribosomal subunit protein uS9.